Reading from the N-terminus, the 201-residue chain is Regulator of G-protein signaling 1 (201 aa).

Residues 75 to 191 (SLEKLLVSEE…LKSEIFFRLA (117 aa)) enclose the RGS domain.

The protein resides in the cell membrane. Its subcellular location is the cytoplasm. The protein localises to the cytosol. Its function is as follows. Regulates G protein-coupled receptor signaling cascades, including signaling downstream of the N-formylpeptide chemoattractant receptors and leukotriene receptors. Inhibits B cell chemotaxis. Inhibits signal transduction by increasing the GTPase activity of G protein alpha subunits, thereby driving them into their inactive GDP-bound form. This chain is Regulator of G-protein signaling 1 (rgs1), found in Xenopus laevis (African clawed frog).